A 391-amino-acid chain; its full sequence is Heme A synthase (391 aa).

8 helical membrane passes run 37–57, 121–141, 152–172, 186–206, 229–249, 298–318, 332–352, and 354–374; these read IRLW…VGGL, RQLG…FLAA, LLAL…MVAS, LATH…QALL, TTVL…VAGI, FLHR…WIFG, LLAM…LSAA, and WQVA…ILHA. Heme is bound at residue histidine 300. Heme is bound at residue histidine 360.

It belongs to the COX15/CtaA family. Type 2 subfamily. In terms of assembly, interacts with CtaB. It depends on heme b as a cofactor.

It localises to the cell membrane. It catalyses the reaction Fe(II)-heme o + 2 A + H2O = Fe(II)-heme a + 2 AH2. Its pathway is porphyrin-containing compound metabolism; heme A biosynthesis; heme A from heme O: step 1/1. Catalyzes the conversion of heme O to heme A by two successive hydroxylations of the methyl group at C8. The first hydroxylation forms heme I, the second hydroxylation results in an unstable dihydroxymethyl group, which spontaneously dehydrates, resulting in the formyl group of heme A. In Cereibacter sphaeroides (strain ATCC 17023 / DSM 158 / JCM 6121 / CCUG 31486 / LMG 2827 / NBRC 12203 / NCIMB 8253 / ATH 2.4.1.) (Rhodobacter sphaeroides), this protein is Heme A synthase.